We begin with the raw amino-acid sequence, 424 residues long: Tyrosine--tRNA ligase (424 aa).

Tyr37 serves as a coordination point for L-tyrosine. The 'HIGH' region signature appears at 42-51; the sequence is PTADSLHLGH. Residues Tyr175 and Gln179 each contribute to the L-tyrosine site. The 'KMSKS' region motif lies at 235-239; it reads KFGKT. Lys238 provides a ligand contact to ATP. In terms of domain architecture, S4 RNA-binding spans 357–414; the sequence is ADLMQALVDAELQPSRGQARKTIASNAVTINGEKQSDPEYIFNDEDRLFGRYTLLRRG.

It belongs to the class-I aminoacyl-tRNA synthetase family. TyrS type 1 subfamily. In terms of assembly, homodimer.

The protein localises to the cytoplasm. It carries out the reaction tRNA(Tyr) + L-tyrosine + ATP = L-tyrosyl-tRNA(Tyr) + AMP + diphosphate + H(+). In terms of biological role, catalyzes the attachment of tyrosine to tRNA(Tyr) in a two-step reaction: tyrosine is first activated by ATP to form Tyr-AMP and then transferred to the acceptor end of tRNA(Tyr). The sequence is that of Tyrosine--tRNA ligase from Salmonella enteritidis PT4 (strain P125109).